The sequence spans 897 residues: Protein transport protein SEC24-1 (897 aa).

Zn(2+) contacts are provided by Cys-213, Cys-216, Cys-235, and Cys-238. Positions 213 to 238 are zinc finger-like; that stretch reads CRRCRSYINPFAKFIEQGRRWRCNFC.

It belongs to the SEC23/SEC24 family. SEC24 subfamily. The COPII coat is composed of at least 5 proteins: the SEC23/24 complex, the SEC13/31 complex, and the protein SAR1. Golgi apparatus membrane; Peripheral membrane protein; Cytoplasmic side.

The protein localises to the cytoplasm. Its subcellular location is the cytoplasmic vesicle. The protein resides in the COPII-coated vesicle membrane. It localises to the endoplasmic reticulum membrane. It is found in the golgi apparatus membrane. Component of the coat protein complex II (COPII) which promotes the formation of transport vesicles from the endoplasmic reticulum (ER). The coat has two main functions, the physical deformation of the endoplasmic reticulum membrane into vesicles and the selection of cargo molecules. The sequence is that of Protein transport protein SEC24-1 (SEC241) from Candida glabrata (strain ATCC 2001 / BCRC 20586 / JCM 3761 / NBRC 0622 / NRRL Y-65 / CBS 138) (Yeast).